The primary structure comprises 665 residues: Envelope glycoprotein (665 aa).

The N-terminal stretch at M1–P31 is a signal peptide. Positions V32 to P267 are receptor-binding domain (RBD). Residues V32–L605 lie on the Extracellular side of the membrane. N-linked (GlcNAc...) asparagine; by host glycosylation is present at N43. 5 disulfides stabilise this stretch: C77/C129, C103/C118, C104/C114, C152/C172, and C164/C177. Zn(2+) is bound at residue D117. N-linked (GlcNAc...) asparagine; by host glycosylation is found at N199 and N211. C209 and C215 are oxidised to a cystine. A disordered region spans residues V266–G307. The N-linked (GlcNAc...) asparagine; by host glycan is linked to N324. 6 disulfide bridges follow: C334–C337, C334–C558, C364–C418, C383–C395, C425–C438, and C550–C557. The CXXC signature appears at C334–C337. 2 N-linked (GlcNAc...) asparagine; by host glycosylation sites follow: N356 and N363. N-linked (GlcNAc...) asparagine; by host glycans are attached at residues N396, N400, and N432. A fusion peptide region spans residues V470–V490. Residues A505–V532 adopt a coiled-coil conformation. Positions L533–L549 are immunosuppression. The CX6CC signature appears at C550–C558. Residues I606–I626 form a helical membrane-spanning segment. A lipid anchor (S-palmitoyl cysteine; by host) is attached at C625. The Cytoplasmic portion of the chain corresponds to L627–E665. A YXXL motif; contains endocytosis signal motif is present at residues Y650 to L653.

In terms of assembly, the mature envelope protein (Env) consists of a trimer of SU-TM heterodimers attached by a labile interchain disulfide bond. Post-translationally, specific enzymatic cleavages in vivo yield mature proteins. Envelope glycoproteins are synthesized as an inactive precursor that is N-glycosylated and processed likely by host cell furin or by a furin-like protease in the Golgi to yield the mature SU and TM proteins. The cleavage site between SU and TM requires the minimal sequence [KR]-X-[KR]-R. The R-peptide is released from the C-terminus of the cytoplasmic tail of the TM protein upon particle formation as a result of proteolytic cleavage by the viral protease. Cleavage of this peptide is required for TM to become fusogenic. The CXXC motif is highly conserved across a broad range of retroviral envelope proteins. It is thought to participate in the formation of a labile disulfide bond possibly with the CX6CC motif present in the transmembrane protein. Isomerization of the intersubunit disulfide bond to an SU intrachain disulfide bond is thought to occur upon receptor recognition in order to allow membrane fusion. In terms of processing, the transmembrane protein is palmitoylated. Post-translationally, the R-peptide is palmitoylated.

It localises to the virion membrane. The protein localises to the host cell membrane. The surface protein (SU) attaches the virus to the host cell by binding to its receptor. This interaction triggers the refolding of the transmembrane protein (TM) and is thought to activate its fusogenic potential by unmasking its fusion peptide. Fusion occurs at the host cell plasma membrane. Its function is as follows. The transmembrane protein (TM) acts as a class I viral fusion protein. Under the current model, the protein has at least 3 conformational states: pre-fusion native state, pre-hairpin intermediate state, and post-fusion hairpin state. During viral and target cell membrane fusion, the coiled coil regions (heptad repeats) assume a trimer-of-hairpins structure, positioning the fusion peptide in close proximity to the C-terminal region of the ectodomain. The formation of this structure appears to drive apposition and subsequent fusion of viral and target cell membranes. Membranes fusion leads to delivery of the nucleocapsid into the cytoplasm. The polypeptide is Envelope glycoprotein (env) (Mus musculus (Mouse)).